The chain runs to 719 residues: Polyribonucleotide nucleotidyltransferase (719 aa).

Mg(2+) is bound by residues Asp-507 and Asp-513. The 61-residue stretch at 573–633 (PKLELFSVDP…EQIKAAKDYI (61 aa)) folds into the KH domain. Residues 658–719 (GQEFQGIVKK…NGKISVDLCE (62 aa)) enclose the S1 motif domain.

Belongs to the polyribonucleotide nucleotidyltransferase family. Mg(2+) serves as cofactor.

It is found in the cytoplasm. It carries out the reaction RNA(n+1) + phosphate = RNA(n) + a ribonucleoside 5'-diphosphate. Functionally, involved in mRNA degradation. Catalyzes the phosphorolysis of single-stranded polyribonucleotides processively in the 3'- to 5'-direction. The chain is Polyribonucleotide nucleotidyltransferase from Campylobacter jejuni subsp. jejuni serotype O:2 (strain ATCC 700819 / NCTC 11168).